The primary structure comprises 183 residues: Small ribosomal subunit protein uS4 (183 aa).

One can recognise an S4 RNA-binding domain in the interval 106–168 (RRLQTQVYRQ…AGSPLAREGH (63 aa)).

It belongs to the universal ribosomal protein uS4 family. In terms of assembly, part of the 30S ribosomal subunit. Contacts protein S5. The interaction surface between S4 and S5 is involved in control of translational fidelity.

Its function is as follows. One of the primary rRNA binding proteins, it binds directly to 16S rRNA where it nucleates assembly of the body of the 30S subunit. Functionally, with S5 and S12 plays an important role in translational accuracy. In Methanothrix thermoacetophila (strain DSM 6194 / JCM 14653 / NBRC 101360 / PT) (Methanosaeta thermophila), this protein is Small ribosomal subunit protein uS4.